A 754-amino-acid chain; its full sequence is Circadian input-output histidine kinase CikA (754 aa).

The tract at residues 1–183 (MLAPSSNCSL…QVSAQIRLSL (183 aa)) is N-terminal domain, not required to complement the deletion strain. Positions 184–338 (DLSEILTTTI…RDILQHLAEH (155 aa)) are GAF domain, required to complement the deletion strain. A Histidine kinase domain is found at 390 to 611 (TMSHELRTPL…TFTVWIPEQT (222 aa)). Residue His-393 is modified to Phosphohistidine; by autocatalysis. The segment at 606 to 754 (WIPEQTLIEP…NLSEGDRPSS (149 aa)) is psR domain, required to complement the deletion strain and for cell pole localization, attenuates autophosphorylation activity. Binds KaiB(fs). The Response regulatory domain occupies 629–742 (HILLLEEEDE…LLLTTLQGLC (114 aa)).

The protein in the N-terminal section; belongs to the phytochrome family. As to quaternary structure, homodimer. Part of the circadian clock (KaiA, KaiB, KaiC, CikA, RpaA, SasA), the composition of which varies during the circadian cycle. Interacts with LdpA. KaiA and CikA compete for binding to KaiB(fs).

Its subcellular location is the cytoplasm. It is found in the membrane. The enzyme catalyses ATP + protein L-histidine = ADP + protein N-phospho-L-histidine.. Functionally, functions in an input pathway to the Kai circadian clock. Senses oxidized quinones via its C-terminal pseudo-receiver domain, providing a link between cell metabolism and the clock. Affects the ratio of phosphorylated to unphosphorylated KaiC, binds quinones via its pseudo-receptor domain. Quinone-binding destabilizes the protein rapidly. Autophosphorylates, does not transfer the phosphate to its pseudo-receiver (PsR) domain. May play a role in cell division, as suggested by its polar location and increased cell length in a deletion strain. Its function is as follows. Member of the two-component regulatory system CikA/RpaA output pathway from the circadian clock, negatively regulating kaiBC expression independently of labA and of sasA. One of three clock output pathways. Dephosphorylates phospho-RpaA, enhanced by KaiB and KaiC, has only modest kinase activity on RpaA. A very robust clock is reconstituted with KaiA, KaiB, KaiC, SasA, CikA and RpaA; output is measured by transcription from an appropriate reporter. This Synechococcus elongatus (strain ATCC 33912 / PCC 7942 / FACHB-805) (Anacystis nidulans R2) protein is Circadian input-output histidine kinase CikA.